The following is a 719-amino-acid chain: Pesticidal crystal protein Cry1Ia (719 aa).

This sequence belongs to the delta endotoxin family.

Promotes colloidosmotic lysis by binding to the midgut epithelial cells of certain coleopteran and lepidopteran species. Active on Plutella xylostella and Bombyx mori. The sequence is that of Pesticidal crystal protein Cry1Ia (cry1Ia) from Bacillus thuringiensis subsp. kurstaki.